Consider the following 626-residue polypeptide: Chaperone protein HtpG (626 aa).

An a; substrate-binding region spans residues 1-331; it reads MSETVERHEF…TDDLPLNVSR (331 aa). Residues 332 to 544 form a b region; the sequence is EMLQSTPTLQ…GMGPDLQMQR (213 aa). Positions 545 to 626 are c; that stretch reads LLRRAGRGFG…GTAAKPAESA (82 aa).

It belongs to the heat shock protein 90 family. In terms of assembly, homodimer.

It is found in the cytoplasm. In terms of biological role, molecular chaperone. Has ATPase activity. This chain is Chaperone protein HtpG, found in Methylorubrum extorquens (strain PA1) (Methylobacterium extorquens).